The primary structure comprises 257 residues: Histidine/lysine/arginine/ornithine transport ATP-binding protein HisP (257 aa).

The ABC transporter domain maps to 6-252 (LNVIDLHKRY…PQSPRLQRFL (247 aa)). ATP-binding residues include Ser40, Gly41, Gly43, Lys44, Ser45, and Thr46.

This sequence belongs to the ABC transporter superfamily. As to quaternary structure, the HisPMQJ complex is composed of two ATP-binding proteins (HisP), two transmembrane proteins (HisM and HisQ) and a solute-binding protein (HisJ). The HisPMQ-ArgT complex is composed of two ATP-binding proteins (HisP), two transmembrane proteins (HisM and HisQ) and a solute-binding protein (ArgT).

Its subcellular location is the cell inner membrane. The enzyme catalyses a polar amino acid(out) + ATP + H2O = a polar amino acid(in) + ADP + phosphate + H(+). The catalysed reaction is L-histidine(out) + ATP + H2O = L-histidine(in) + ADP + phosphate + H(+). It carries out the reaction L-lysine(out) + ATP + H2O = L-lysine(in) + ADP + phosphate + H(+). It catalyses the reaction L-arginine(out) + ATP + H2O = L-arginine(in) + ADP + phosphate + H(+). The enzyme catalyses L-ornithine(out) + ATP + H2O = L-ornithine(in) + ADP + phosphate + H(+). Its function is as follows. Part of the ABC transporter complex HisPMQJ involved in histidine transport. Is also part of the ABC transporter complex HisPMQ-ArgT involved in lysine/arginine/ornithine transport. Shows ATPase activity. Responsible for energy coupling to the transport system. This Escherichia coli (strain K12) protein is Histidine/lysine/arginine/ornithine transport ATP-binding protein HisP.